The sequence spans 4023 residues: Hybrid PKS-NRPS synthetase pvhA (4023 aa).

Residues 7-440 enclose the Ketosynthase family 3 (KS3) domain; sequence DERIAVIGTG…GTNAHAIIEE (434 aa). Active-site for beta-ketoacyl synthase activity residues include C180, H319, and H360. Residues 550–871 form a malonyl-CoA:ACP transacylase (MAT) domain region; sequence VFTGQGAQWA…PYVGLLGRGK (322 aa). The N-terminal hotdog fold stretch occupies residues 945–1080; it reads HPLLGKRCYD…GVVRATLAEN (136 aa). Residues 945–1249 form a dehydratase (DH) domain region; it reads HPLLGKRCYD…QAEGLEIVPL (305 aa). Positions 945-1255 constitute a PKS/mFAS DH domain; sequence HPLLGKRCYD…IVPLAAAVPD (311 aa). The active-site Proton acceptor; for dehydratase activity is H978. The segment at 1099-1255 is C-terminal hotdog fold; sequence DLSPVDTERF…IVPLAAAVPD (157 aa). D1160 acts as the Proton donor; for dehydratase activity in catalysis. Residues 1402–1585 form a methyltransferase (MT) domain region; that stretch reads AELYEKAIGF…GFSGTDTISP (184 aa). Positions 2120-2291 are ketoreductase (KR) domain; it reads TYLLVGLTGE…GVAGSSINIS (172 aa). In terms of domain architecture, Carrier 1 spans 2404–2479; the sequence is SIIKEVFLAR…GIIKQVVELL (76 aa). O-(pantetheine 4'-phosphoryl)serine is present on S2439. Positions 2490–2580 are disordered; sequence TPQTLSKNPA…VMSKPSASSQ (91 aa). The span at 2502-2529 shows a compositional bias: low complexity; the sequence is PVKAPVSAPSTPAAASQPVLTDSTASSS. Over residues 2565–2580 the composition is skewed to polar residues; sequence PVNTPNVMSKPSASSQ. Positions 2604–3043 are condensation (C) domain; it reads PMSHGQEGFW…DIPSWSELDI (440 aa). Positions 3072–3467 are adenylation (A) (KR) domain; that stretch reads EMITVHGSTT…DGTLVVEGRL (396 aa). Residues 3593–3670 enclose the Carrier 2 domain; that stretch reads SVLSGTERQL…AMADAVQKEV (78 aa). S3630 bears the O-(pantetheine 4'-phosphoryl)serine mark. Positions 3783 to 3932 are reductase (RED) domain; that stretch reads ETDVIMHCVA…IAPVDDMAQS (150 aa).

In the C-terminal section; belongs to the NRP synthetase family.

It functions in the pathway secondary metabolite biosynthesis. Hybrid PKS-NRPS synthetase; part of the gene cluster that mediates the biosynthesis of varicidin A, an antifungal natural product containing a cis-octahydrodecalin core. The PKS module of pvhA together with the enoylreductase pvhC catalyze the formation of the polyketide unit which is then conjugated to L-isoleucine by the condensation domain of the NRPS module. Activity of the Dieckmann cyclase domain (RED) of pvhA results in release of an acyclic tetramate. The cytochrome P450 monooxygenase pvhE then catalyzes the oxidation of the C21 methyl group to a to carboxylate group. The methyltransferase pvhD then further methylates the pvhE product. The Diels-Alderase pvhB is able to catalyze Diels-Alder cycloaddition using both pvhE and pvhD products as substrates to form the decalin ring, yielding varicidin B and A, respectively. The polypeptide is Hybrid PKS-NRPS synthetase pvhA (Talaromyces variabilis (Penicillium variabile)).